A 700-amino-acid polypeptide reads, in one-letter code: pH-response regulator protein palI/prr-5 (700 aa).

Residues M1–L8 lie on the Cytoplasmic side of the membrane. A helical transmembrane segment spans residues A9–I29. Residues K30–S90 are Extracellular-facing. A helical transmembrane segment spans residues I91 to V111. Residues A112–Y123 lie on the Cytoplasmic side of the membrane. The helical transmembrane segment at L124–V144 threads the bilayer. The Extracellular portion of the chain corresponds to D145–H152. Residues L153 to V173 form a helical membrane-spanning segment. At T174 to R700 the chain is on the cytoplasmic side. Disordered regions lie at residues S226–D491, V507–E560, and D573–R700. Over residues K234–I252 the composition is skewed to basic and acidic residues. Residues G320 to R378 are compositionally biased toward gly residues. Positions S414–G424 are enriched in polar residues. 2 stretches are compositionally biased toward polar residues: residues S593 to Y603 and E615 to N637. Over residues V657–A671 the composition is skewed to low complexity.

The protein belongs to the palI/RIM9 family.

Its subcellular location is the cell membrane. Functionally, required for the proteolytic cleavage of the transcription factor pacc-1 in response to alkaline ambient pH. The chain is pH-response regulator protein palI/prr-5 (prr-5) from Neurospora crassa (strain ATCC 24698 / 74-OR23-1A / CBS 708.71 / DSM 1257 / FGSC 987).